Reading from the N-terminus, the 517-residue chain is MSDAETNAWDAIHRVEKRTLLELFDADSERVSKLSHRLAWGVESPGGQEAGGILFDWSKTHLTDELLDGFEALADAMDFAGAREKLLSGAKINVTEGRAAEHTAQRGTGAEASVEEAVALMGRMKALVDAIHGGAMGEVKHLIHVGIGGSALGPKLALDALTRDLALVDVHVVSNIDGVALEQAFAACDPATTLIAIASKTFTTIETMTNATSALHWLKTNGVDDPHGRVVALTANPEAAVEFGVDETRVLPFMESVGGRYSLWSSIGFPVALGAGWDEFEGMLAGAQAMDEHFASADGRANLPLLAAFADLYYTRVRGCQARACFAYDERLGLLPDYLQQLEMESNGKRVKADGTPVDGPTAPITWGGVGTDAQHAVFQLLHQGTHLVPVDFIASIAPGDDLDPAHHRILLTNCFAQGAALMAGGNMAADEKDPARVFPGDRPSATMLCDDLDAVTLGALIAFHEHRTFANAVLMGINPFDQFGVELGKKMAKDIESGGAEFDASTQALVGAAGLA.

The active-site Proton donor is the Glu-345. Catalysis depends on residues His-376 and Lys-490.

It belongs to the GPI family.

The protein resides in the cytoplasm. It catalyses the reaction alpha-D-glucose 6-phosphate = beta-D-fructose 6-phosphate. It participates in carbohydrate biosynthesis; gluconeogenesis. It functions in the pathway carbohydrate degradation; glycolysis; D-glyceraldehyde 3-phosphate and glycerone phosphate from D-glucose: step 2/4. In terms of biological role, catalyzes the reversible isomerization of glucose-6-phosphate to fructose-6-phosphate. This Erythrobacter litoralis (strain HTCC2594) protein is Glucose-6-phosphate isomerase.